We begin with the raw amino-acid sequence, 182 residues long: Endoribonuclease YbeY (182 aa).

Zn(2+) is bound by residues His115, His119, and His125.

Belongs to the endoribonuclease YbeY family. Zn(2+) is required as a cofactor.

The protein resides in the cytoplasm. Single strand-specific metallo-endoribonuclease involved in late-stage 70S ribosome quality control and in maturation of the 3' terminus of the 16S rRNA. This Bifidobacterium longum subsp. infantis (strain ATCC 15697 / DSM 20088 / JCM 1222 / NCTC 11817 / S12) protein is Endoribonuclease YbeY.